The sequence spans 578 residues: Protein RIK (578 aa).

The disordered stretch occupies residues 1 to 34 (MTEDNDEARVPLSDSSTTNDASRTRQRRKRKWDK). One can recognise a KH domain in the interval 206–273 (SSNVAARIRG…KSIDDAKRLA (68 aa)). The span at 413–425 (ATSLSIPSDNASN) shows a compositional bias: polar residues. Residues 413 to 578 (ATSLSIPSDN…DPDEPLTTRS (166 aa)) form a disordered region. Residues 472-492 (PPSPRSVMPPPPPKTIAPPPS) are compositionally biased toward pro residues. Low complexity-rich tracts occupy residues 493 to 503 (KTMSPPSSKSM) and 510 to 521 (SKTMSPLSSKSM). Over residues 560–572 (YGDDEDDDDDPDE) the composition is skewed to acidic residues.

As to quaternary structure, interacts with AS1. Expressed in vegetative tissues.

It is found in the nucleus. The chain is Protein RIK (RIK) from Arabidopsis thaliana (Mouse-ear cress).